A 338-amino-acid polypeptide reads, in one-letter code: Electron transfer flavoprotein subunit alpha (338 aa).

FAD is bound at residue 275-303 (IYIACAISGAIQPLAGMTGSDCIIAINKD).

It belongs to the ETF alpha-subunit/FixB family. Heterodimer of an alpha and a beta subunit. The cofactor is FAD.

Functionally, the electron transfer flavoprotein serves as a specific electron acceptor for other dehydrogenases. It transfers the electrons to the main respiratory chain via ETF-ubiquinone oxidoreductase (ETF dehydrogenase). This Megasphaera elsdenii protein is Electron transfer flavoprotein subunit alpha (etfA).